A 33-amino-acid polypeptide reads, in one-letter code: Non-specific lipid-transfer protein (33 aa).

Cysteine 14 and cysteine 29 form a disulfide bridge.

Belongs to the plant LTP family. In terms of assembly, dimer.

Its function is as follows. Plant non-specific lipid-transfer proteins transfer phospholipids as well as galactolipids across membranes. May play a role in wax or cutin deposition in the cell walls of expanding epidermal cells and certain secretory tissues. Has antibacterial activity against Gram-positive bacteria S.aureus and S.epidermidis and blocks biofilm formation. In a mouse model, also protects against bacterial sepsis and has an anti-inflammatory effect. Exhibits antinociceptive activity upon oral or intraperitoneal application in mice. This Morinda citrifolia (Indian mulberry) protein is Non-specific lipid-transfer protein.